The sequence spans 138 residues: Large ribosomal subunit protein bL17 (138 aa).

This sequence belongs to the bacterial ribosomal protein bL17 family. As to quaternary structure, part of the 50S ribosomal subunit. Contacts protein L32.

The sequence is that of Large ribosomal subunit protein bL17 from Nitrobacter hamburgensis (strain DSM 10229 / NCIMB 13809 / X14).